The chain runs to 383 residues: Hydroxymethylglutaryl-CoA synthase (383 aa).

Position 29 (aspartate 29) interacts with (3S)-3-hydroxy-3-methylglutaryl-CoA. Residue glutamate 79 is the Proton donor/acceptor of the active site. (3S)-3-hydroxy-3-methylglutaryl-CoA is bound by residues cysteine 111, threonine 152, serine 201, histidine 233, lysine 242, asparagine 275, and serine 308. Cysteine 111 serves as the catalytic Acyl-thioester intermediate. The active-site Proton donor/acceptor is histidine 233.

This sequence belongs to the thiolase-like superfamily. HMG-CoA synthase family. Homodimer.

It catalyses the reaction acetoacetyl-CoA + acetyl-CoA + H2O = (3S)-3-hydroxy-3-methylglutaryl-CoA + CoA + H(+). It functions in the pathway metabolic intermediate biosynthesis; (R)-mevalonate biosynthesis; (R)-mevalonate from acetyl-CoA: step 2/3. Is sensitive to feedback substrate inhibition by acetoacetyl-CoA. Is inactivated by hymeglusin, which also blocks the growth of E.faecalis, indicating the critical role that the mevalonate pathway plays in isoprenoid biosynthesis. In terms of biological role, catalyzes the condensation of acetyl-CoA with acetoacetyl-CoA to form 3-hydroxy-3-methylglutaryl-CoA (HMG-CoA). Functions in the mevalonate (MVA) pathway leading to isopentenyl diphosphate (IPP), a key precursor for the biosynthesis of isoprenoid compounds. The sequence is that of Hydroxymethylglutaryl-CoA synthase (mvaS) from Enterococcus faecalis (Streptococcus faecalis).